The following is a 459-amino-acid chain: V-type ATP synthase beta chain (459 aa).

Belongs to the ATPase alpha/beta chains family.

Its function is as follows. Produces ATP from ADP in the presence of a proton gradient across the membrane. The V-type beta chain is a regulatory subunit. In Clostridium botulinum (strain Alaska E43 / Type E3), this protein is V-type ATP synthase beta chain.